The chain runs to 594 residues: Zinc finger protein 37 (594 aa).

A disordered region spans residues 1–253; the sequence is MATSEPAESD…KPEKAPGSGK (253 aa). The residue at position 3 (threonine 3) is a Phosphothreonine. One can recognise a KRAB domain in the interval 3-74; that stretch reads TSEPAESDAV…GKKASPSSLK (72 aa). Position 9 is a phosphoserine (serine 9). The span at 10 to 33 shows a compositional bias: basic and acidic residues; sequence DAVRAKEWEQLEPVQRDVYKDTKL. Residues 34–46 show a composition bias toward polar residues; that stretch reads ENCSNPASMGNQD. Basic and acidic residues predominate over residues 89 to 111; the sequence is QQDDEHREEKQKSQSKLTKEVTL. The span at 145–158 shows a compositional bias: polar residues; the sequence is KSSSRGKNSNQNSD. 2 stretches are compositionally biased toward basic and acidic residues: residues 159–172 and 181–234; these read SLKK…DHRK and VNKD…TGEK. C2H2-type zinc fingers lie at residues 255-277, 283-305, 311-324, 339-361, 367-389, 395-417, 423-445, 451-473, 479-501, 507-529, 535-557, and 563-585; these read YECN…QRTH, YECE…GHKH, YKCN…LRSH, YECK…VRTH, YECN…MRIH, FECN…QRTH, YKCD…MRTH, FECN…QRVH, YECV…QRTH, FECY…QRSH, and YECI…MKIH.

This sequence belongs to the krueppel C2H2-type zinc-finger protein family. Expressed in testis and brain.

It localises to the nucleus. In terms of biological role, may have a role in regulating spermiogenesis. The sequence is that of Zinc finger protein 37 (Zfp37) from Mus musculus (Mouse).